The sequence spans 957 residues: Valine--tRNA ligase (957 aa).

The 'HIGH' region motif lies at 45–55; sequence PNVTGSLHMGH. The 'KMSKS' region motif lies at 571 to 575; sequence KMSKS. Lys-574 serves as a coordination point for ATP. The stretch at 887-946 forms a coiled coil; it reads VVDFAAEQARLEKELGKAEADIKRAEAKLANEKFVANAAEEVVEEEREKREAAVARKVKI.

Belongs to the class-I aminoacyl-tRNA synthetase family. ValS type 1 subfamily. Monomer.

It localises to the cytoplasm. It catalyses the reaction tRNA(Val) + L-valine + ATP = L-valyl-tRNA(Val) + AMP + diphosphate. In terms of biological role, catalyzes the attachment of valine to tRNA(Val). As ValRS can inadvertently accommodate and process structurally similar amino acids such as threonine, to avoid such errors, it has a 'posttransfer' editing activity that hydrolyzes mischarged Thr-tRNA(Val) in a tRNA-dependent manner. This chain is Valine--tRNA ligase, found in Rhodopseudomonas palustris (strain ATCC BAA-98 / CGA009).